Here is a 214-residue protein sequence, read N- to C-terminus: Transcriptional regulatory protein MctR (214 aa).

The Response regulatory domain occupies 8 to 124; sequence RVLLIDNHPL…EIVSAIETVA (117 aa). Asp59 is modified (4-aspartylphosphate). One can recognise an HTH luxR-type domain in the interval 143–208; that stretch reads VEEGSDPLTP…GLIRYALDHG (66 aa). The H-T-H motif DNA-binding region spans 167–186; the sequence is NKEIAETLGITSATAETHRK.

The protein resides in the cytoplasm. In terms of biological role, member of the two-component regulatory system MctS/MctR, which activates mctP expression. The protein is Transcriptional regulatory protein MctR of Rhizobium johnstonii (strain DSM 114642 / LMG 32736 / 3841) (Rhizobium leguminosarum bv. viciae).